The chain runs to 198 residues: MLVTKLAPDFKAPAVLGNNEVDEHFELSKNLGKNGVILFFWPKDFTFVCPTEIIAFDKRVKDFHEKGFNVIGVSIDSEQVHFAWKNTPVEKGGIGQVSFPMVADITKSISRDYDVLFEEAIALRGAFLIDKNMKVRHAVINDLPLGRNADEMLRMVDALLHFEEHGEVCPAGWRKGDKGMKATHQGVAEYLKENSIKL.

The Thioredoxin domain maps to 2–161 (LVTKLAPDFK…MLRMVDALLH (160 aa)). Catalysis depends on Cys49, which acts as the Cysteine sulfenic acid (-SOH) intermediate.

Belongs to the peroxiredoxin family. AhpC/Prx1 subfamily. As to quaternary structure, homodimer; disulfide-linked, upon oxidation. 5 homodimers assemble to form a ring-like decamer.

The protein resides in the cytoplasm. The catalysed reaction is a hydroperoxide + NADH + H(+) = an alcohol + NAD(+) + H2O. In terms of biological role, thiol-specific peroxidase that catalyzes the reduction of hydrogen peroxide and organic hydroperoxides to water and alcohols, respectively. Plays a role in cell protection against oxidative stress by detoxifying peroxides. This is Alkyl hydroperoxide reductase C (ahpC) from Helicobacter pylori (strain J99 / ATCC 700824) (Campylobacter pylori J99).